A 95-amino-acid chain; its full sequence is Large ribosomal subunit protein bL25 (95 aa).

The protein belongs to the bacterial ribosomal protein bL25 family. In terms of assembly, part of the 50S ribosomal subunit; part of the 5S rRNA/L5/L18/L25 subcomplex. Contacts the 5S rRNA. Binds to the 5S rRNA independently of L5 and L18.

This is one of the proteins that binds to the 5S RNA in the ribosome where it forms part of the central protuberance. The protein is Large ribosomal subunit protein bL25 of Actinobacillus pleuropneumoniae serotype 5b (strain L20).